A 433-amino-acid polypeptide reads, in one-letter code: Tol-Pal system protein TolB (433 aa).

Residues 1-21 form the signal peptide; sequence MINLFRGLLVVLCFASAMVAA.

It belongs to the TolB family. The Tol-Pal system is composed of five core proteins: the inner membrane proteins TolA, TolQ and TolR, the periplasmic protein TolB and the outer membrane protein Pal. They form a network linking the inner and outer membranes and the peptidoglycan layer.

It is found in the periplasm. Its function is as follows. Part of the Tol-Pal system, which plays a role in outer membrane invagination during cell division and is important for maintaining outer membrane integrity. In Pseudomonas syringae pv. tomato (strain ATCC BAA-871 / DC3000), this protein is Tol-Pal system protein TolB.